Reading from the N-terminus, the 489-residue chain is DNA-directed RNA polymerase subunit beta' C-terminal section (489 aa).

Positions 208, 210, and 212 each coordinate Mg(2+).

The protein belongs to the RNA polymerase beta' chain family. RpoC1 subfamily. In plastids the minimal PEP RNA polymerase catalytic core is composed of four subunits: alpha, beta, beta', and beta''. When a (nuclear-encoded) sigma factor is associated with the core the holoenzyme is formed, which can initiate transcription. Mg(2+) is required as a cofactor.

The protein localises to the plastid. Its subcellular location is the chloroplast. It catalyses the reaction RNA(n) + a ribonucleoside 5'-triphosphate = RNA(n+1) + diphosphate. Functionally, DNA-dependent RNA polymerase catalyzes the transcription of DNA into RNA using the four ribonucleoside triphosphates as substrates. The protein is DNA-directed RNA polymerase subunit beta' C-terminal section (rpoC1B) of Chlamydomonas reinhardtii (Chlamydomonas smithii).